The primary structure comprises 465 residues: Trigger factor (465 aa).

One can recognise a PPIase FKBP-type domain in the interval 163–248; the sequence is GDVINFNFKG…INKIKENQPA (86 aa). The segment at 431 to 465 is disordered; that stretch reads EIVNKNQNDNEIEQDKEQKDNNEEKIKQENNLENK. Over residues 443–465 the composition is skewed to basic and acidic residues; sequence EQDKEQKDNNEEKIKQENNLENK.

This sequence belongs to the FKBP-type PPIase family. Tig subfamily.

It is found in the cytoplasm. It carries out the reaction [protein]-peptidylproline (omega=180) = [protein]-peptidylproline (omega=0). In terms of biological role, involved in protein export. Acts as a chaperone by maintaining the newly synthesized protein in an open conformation. Functions as a peptidyl-prolyl cis-trans isomerase. The sequence is that of Trigger factor from Mesomycoplasma hyopneumoniae (strain 232) (Mycoplasma hyopneumoniae).